Reading from the N-terminus, the 189-residue chain is Ribosome maturation factor RimM (189 aa).

One can recognise a PRC barrel domain in the interval 95-177 (EDDEFYYADL…AGLVDDPEEL (83 aa)).

It belongs to the RimM family. In terms of assembly, binds ribosomal protein uS19.

The protein localises to the cytoplasm. Its function is as follows. An accessory protein needed during the final step in the assembly of 30S ribosomal subunit, possibly for assembly of the head region. Essential for efficient processing of 16S rRNA. May be needed both before and after RbfA during the maturation of 16S rRNA. It has affinity for free ribosomal 30S subunits but not for 70S ribosomes. This Rhizobium leguminosarum bv. trifolii (strain WSM2304) protein is Ribosome maturation factor RimM.